The sequence spans 321 residues: o-succinylbenzoate synthase (321 aa).

The active-site Proton donor is Lys-134. Mg(2+)-binding residues include Asp-162, Glu-191, and Asp-214. Lys-236 acts as the Proton acceptor in catalysis.

This sequence belongs to the mandelate racemase/muconate lactonizing enzyme family. MenC type 1 subfamily. A divalent metal cation serves as cofactor.

It catalyses the reaction (1R,6R)-6-hydroxy-2-succinyl-cyclohexa-2,4-diene-1-carboxylate = 2-succinylbenzoate + H2O. Its pathway is quinol/quinone metabolism; 1,4-dihydroxy-2-naphthoate biosynthesis; 1,4-dihydroxy-2-naphthoate from chorismate: step 4/7. The protein operates within quinol/quinone metabolism; menaquinone biosynthesis. Its function is as follows. Converts 2-succinyl-6-hydroxy-2,4-cyclohexadiene-1-carboxylate (SHCHC) to 2-succinylbenzoate (OSB). In Enterobacter sp. (strain 638), this protein is o-succinylbenzoate synthase.